The chain runs to 162 residues: Caveolin-2 (162 aa).

At 1–86 the chain is on the cytoplasmic side; it reads MGLETEKTDV…FEISKYVMYK (86 aa). Phosphotyrosine; by SRC is present on Tyr19. Ser20 and Ser23 each carry phosphoserine. Tyr27 carries the phosphotyrosine; by SRC modification. Ser36 bears the Phosphoserine mark. Positions 87 to 107 form an intramembrane region, helical; the sequence is FLTVFLAIPLAFLAGILFATL. Residues 108 to 162 are Cytoplasmic-facing; the sequence is SCLHIWIIMPFVKTCLMVLPSVQTIWKSVTDAIVAPLCTSIGRSFSSVSLQLSQD.

This sequence belongs to the caveolin family. As to quaternary structure, monomer or homodimer. Interacts with CAV1; the interaction forms a stable heterooligomeric complex that is required for targeting to lipid rafts and for caveolae formation. Tyrosine phosphorylated forms do not form heterooligomers with the Tyr-19-phosphorylated form existing as a monomer or dimer, and the Tyr-27-form as a monomer only. Interacts (tyrosine phosphorylated form) with the SH2 domain-containing proteins, RASA1, NCK1 and SRC. Interacts (tyrosine phosphorylated form) with INSR, the interaction (Tyr-27-phosphorylated form) is increased on insulin stimulation. Interacts (Tyr-19 phosphorylated form) with MAPK1 (phosphorylated form); the interaction, promoted by insulin, leads to nuclear location and MAPK1 activation. Interacts with STAT3; the interaction is increased on insulin-induced tyrosine phosphorylation leading to STAT activation. Phosphorylated on serine and tyrosine residues. CAV1 promotes phosphorylation on Ser-23 which then targets the complex to the plasma membrane, lipid rafts and caveolae. Phosphorylation on Ser-36 appears to modulate mitosis in endothelial cells. Phosphorylation on both Tyr-19 and Tyr-27 is required for insulin-induced 'Ser-727' phosphorylation of STAT3 and its activation. Phosphorylation on Tyr-19 is required for insulin-induced phosphorylation of MAPK1 and DNA binding of STAT3. Tyrosine phosphorylation is induced by both EGF and insulin (By. similarity).

Its subcellular location is the nucleus. The protein localises to the cytoplasm. It localises to the golgi apparatus membrane. It is found in the cell membrane. The protein resides in the membrane. Its subcellular location is the caveola. Its function is as follows. May act as a scaffolding protein within caveolar membranes. Interacts directly with G-protein alpha subunits and can functionally regulate their activity. Acts as an accessory protein in conjunction with CAV1 in targeting to lipid rafts and driving caveolae formation. The Ser-36 phosphorylated form has a role in modulating mitosis in endothelial cells. Positive regulator of cellular mitogenesis of the MAPK signaling pathway. Required for the insulin-stimulated nuclear translocation and activation of MAPK1 and STAT3, and the subsequent regulation of cell cycle progression. The polypeptide is Caveolin-2 (CAV2) (Aotus nancymaae (Ma's night monkey)).